A 180-amino-acid polypeptide reads, in one-letter code: ATP-dependent protease subunit HslV (180 aa).

Threonine 7 is an active-site residue. Residues glycine 165, cysteine 168, and threonine 171 each contribute to the Na(+) site.

Belongs to the peptidase T1B family. HslV subfamily. A double ring-shaped homohexamer of HslV is capped on each side by a ring-shaped HslU homohexamer. The assembly of the HslU/HslV complex is dependent on binding of ATP.

It is found in the cytoplasm. It carries out the reaction ATP-dependent cleavage of peptide bonds with broad specificity.. Allosterically activated by HslU binding. Protease subunit of a proteasome-like degradation complex believed to be a general protein degrading machinery. This is ATP-dependent protease subunit HslV from Bacillus cereus (strain Q1).